The primary structure comprises 65 residues: Large ribosomal subunit protein bL35 (65 aa).

It belongs to the bacterial ribosomal protein bL35 family.

In Prochlorococcus marinus (strain MIT 9301), this protein is Large ribosomal subunit protein bL35.